Here is a 305-residue protein sequence, read N- to C-terminus: Methionyl-tRNA formyltransferase (305 aa).

109–112 (SLLP) contacts (6S)-5,6,7,8-tetrahydrofolate.

It belongs to the Fmt family.

It carries out the reaction L-methionyl-tRNA(fMet) + (6R)-10-formyltetrahydrofolate = N-formyl-L-methionyl-tRNA(fMet) + (6S)-5,6,7,8-tetrahydrofolate + H(+). Functionally, attaches a formyl group to the free amino group of methionyl-tRNA(fMet). The formyl group appears to play a dual role in the initiator identity of N-formylmethionyl-tRNA by promoting its recognition by IF2 and preventing the misappropriation of this tRNA by the elongation apparatus. This is Methionyl-tRNA formyltransferase from Paramagnetospirillum magneticum (strain ATCC 700264 / AMB-1) (Magnetospirillum magneticum).